Consider the following 194-residue polypeptide: Peptidyl-tRNA hydrolase (194 aa).

Y17 lines the tRNA pocket. H22 acts as the Proton acceptor in catalysis. 3 residues coordinate tRNA: Y68, N70, and N116.

This sequence belongs to the PTH family. Monomer.

It is found in the cytoplasm. The enzyme catalyses an N-acyl-L-alpha-aminoacyl-tRNA + H2O = an N-acyl-L-amino acid + a tRNA + H(+). Its function is as follows. Hydrolyzes ribosome-free peptidyl-tRNAs (with 1 or more amino acids incorporated), which drop off the ribosome during protein synthesis, or as a result of ribosome stalling. Functionally, catalyzes the release of premature peptidyl moieties from peptidyl-tRNA molecules trapped in stalled 50S ribosomal subunits, and thus maintains levels of free tRNAs and 50S ribosomes. The protein is Peptidyl-tRNA hydrolase of Pseudomonas savastanoi pv. phaseolicola (strain 1448A / Race 6) (Pseudomonas syringae pv. phaseolicola (strain 1448A / Race 6)).